A 309-amino-acid chain; its full sequence is Aspartate carbamoyltransferase catalytic subunit (309 aa).

Positions 55 and 56 each coordinate carbamoyl phosphate. L-aspartate is bound at residue Lys85. Carbamoyl phosphate contacts are provided by Arg106, His135, and Gln138. Residues Arg168 and Arg230 each contribute to the L-aspartate site. Carbamoyl phosphate-binding residues include Leu268 and Pro269.

This sequence belongs to the aspartate/ornithine carbamoyltransferase superfamily. ATCase family. In terms of assembly, heterododecamer (2C3:3R2) of six catalytic PyrB chains organized as two trimers (C3), and six regulatory PyrI chains organized as three dimers (R2).

It carries out the reaction carbamoyl phosphate + L-aspartate = N-carbamoyl-L-aspartate + phosphate + H(+). The protein operates within pyrimidine metabolism; UMP biosynthesis via de novo pathway; (S)-dihydroorotate from bicarbonate: step 2/3. Functionally, catalyzes the condensation of carbamoyl phosphate and aspartate to form carbamoyl aspartate and inorganic phosphate, the committed step in the de novo pyrimidine nucleotide biosynthesis pathway. The sequence is that of Aspartate carbamoyltransferase catalytic subunit from Vibrio cholerae serotype O1 (strain ATCC 39541 / Classical Ogawa 395 / O395).